The primary structure comprises 317 residues: 1-phosphofructokinase (317 aa).

ATP is bound by residues 223 to 228 and 254 to 255; these read SMGAEG and GD. The Proton acceptor role is filled by D255.

The protein belongs to the carbohydrate kinase PfkB family.

It carries out the reaction beta-D-fructose 1-phosphate + ATP = beta-D-fructose 1,6-bisphosphate + ADP + H(+). Catalyzes the ATP-dependent phosphorylation of fructose-l-phosphate to fructose-l,6-bisphosphate. In Vibrio cholerae serotype O1 (strain ATCC 39315 / El Tor Inaba N16961), this protein is 1-phosphofructokinase.